A 1124-amino-acid chain; its full sequence is Putative DNA mismatch repair protein mutS homolog L359 (1124 aa).

Residue 779–786 (SNNWAGKS) participates in ATP binding.

It belongs to the DNA mismatch repair MutS family.

Functionally, may be involved in DNA-mismatch repair. The polypeptide is Putative DNA mismatch repair protein mutS homolog L359 (Acanthamoeba polyphaga (Amoeba)).